A 378-amino-acid chain; its full sequence is Valine--tRNA ligase (378 aa).

Residues 307–377 (AGFINKEAEL…IQEQYKAIEA (71 aa)) are a coiled coil.

It belongs to the class-I aminoacyl-tRNA synthetase family. ValS type 1 subfamily. Monomer.

Its subcellular location is the cytoplasm. The catalysed reaction is tRNA(Val) + L-valine + ATP = L-valyl-tRNA(Val) + AMP + diphosphate. In terms of biological role, catalyzes the attachment of valine to tRNA(Val). As ValRS can inadvertently accommodate and process structurally similar amino acids such as threonine, to avoid such errors, it has a 'posttransfer' editing activity that hydrolyzes mischarged Thr-tRNA(Val) in a tRNA-dependent manner. This is Valine--tRNA ligase (valS) from Haemophilus parainfluenzae.